A 684-amino-acid chain; its full sequence is Agnestins biosynthesis cluster transcription factor AgnL11 (684 aa).

Positions Cys-25–Cys-51 form a DNA-binding region, zn(2)-C6 fungal-type. Residues Asn-76 to Glu-103 are a coiled coil. The disordered stretch occupies residues Lys-601 to Trp-644. Basic and acidic residues predominate over residues Ala-606–Arg-619.

The protein localises to the nucleus. Transcription factor that regulates the expression of the gene cluster that mediates the biosynthesis of agnestins, dihydroxy-xanthone metabolites. This chain is Agnestins biosynthesis cluster transcription factor AgnL11, found in Paecilomyces divaricatus (Penicillium divaricatum).